A 136-amino-acid chain; its full sequence is Translation initiation factor 5A (136 aa).

Lys38 carries the post-translational modification Hypusine.

This sequence belongs to the eIF-5A family.

The protein resides in the cytoplasm. Functions by promoting the formation of the first peptide bond. This Methanopyrus kandleri (strain AV19 / DSM 6324 / JCM 9639 / NBRC 100938) protein is Translation initiation factor 5A.